Here is a 373-residue protein sequence, read N- to C-terminus: 3 beta-hydroxysteroid dehydrogenase/Delta 5--&gt;4-isomerase type 2 (373 aa).

Tyrosine 155 (proton acceptor) is an active-site residue. Lysine 159 lines the NAD(+) pocket. Residues 288 to 308 (LPLLYWLAFLLETVSFLLRPF) traverse the membrane as a helical segment.

The protein belongs to the 3-beta-HSD family. In terms of tissue distribution, adrenal glands, testes and ovaries.

The protein resides in the endoplasmic reticulum membrane. The protein localises to the mitochondrion membrane. It carries out the reaction a 3beta-hydroxy-Delta(5)-steroid + NAD(+) = a 3-oxo-Delta(5)-steroid + NADH + H(+). The enzyme catalyses a 3-oxo-Delta(5)-steroid = a 3-oxo-Delta(4)-steroid. Its pathway is lipid metabolism; steroid biosynthesis. In terms of biological role, 3-beta-HSD is a bifunctional enzyme, that catalyzes the oxidative conversion of Delta(5)-ene-3-beta-hydroxy steroid, and the oxidative conversion of ketosteroids. The 3-beta-HSD enzymatic system plays a crucial role in the biosynthesis of all classes of hormonal steroids. The protein is 3 beta-hydroxysteroid dehydrogenase/Delta 5--&gt;4-isomerase type 2 (Hsd3b) of Rattus norvegicus (Rat).